The primary structure comprises 572 residues: Proline--tRNA ligase (572 aa).

The protein belongs to the class-II aminoacyl-tRNA synthetase family. ProS type 1 subfamily. In terms of assembly, homodimer.

It is found in the cytoplasm. The enzyme catalyses tRNA(Pro) + L-proline + ATP = L-prolyl-tRNA(Pro) + AMP + diphosphate. Functionally, catalyzes the attachment of proline to tRNA(Pro) in a two-step reaction: proline is first activated by ATP to form Pro-AMP and then transferred to the acceptor end of tRNA(Pro). As ProRS can inadvertently accommodate and process non-cognate amino acids such as alanine and cysteine, to avoid such errors it has two additional distinct editing activities against alanine. One activity is designated as 'pretransfer' editing and involves the tRNA(Pro)-independent hydrolysis of activated Ala-AMP. The other activity is designated 'posttransfer' editing and involves deacylation of mischarged Ala-tRNA(Pro). The misacylated Cys-tRNA(Pro) is not edited by ProRS. The polypeptide is Proline--tRNA ligase (Escherichia coli O17:K52:H18 (strain UMN026 / ExPEC)).